The chain runs to 125 residues: Large ribosomal subunit protein uL22 (125 aa).

The protein belongs to the universal ribosomal protein uL22 family. As to quaternary structure, part of the 50S ribosomal subunit.

In terms of biological role, this protein binds specifically to 23S rRNA; its binding is stimulated by other ribosomal proteins, e.g. L4, L17, and L20. It is important during the early stages of 50S assembly. It makes multiple contacts with different domains of the 23S rRNA in the assembled 50S subunit and ribosome. The globular domain of the protein is located near the polypeptide exit tunnel on the outside of the subunit, while an extended beta-hairpin is found that lines the wall of the exit tunnel in the center of the 70S ribosome. This chain is Large ribosomal subunit protein uL22, found in Acetivibrio thermocellus (strain ATCC 27405 / DSM 1237 / JCM 9322 / NBRC 103400 / NCIMB 10682 / NRRL B-4536 / VPI 7372) (Clostridium thermocellum).